Here is a 421-residue protein sequence, read N- to C-terminus: Shaggy-related protein kinase kappa (421 aa).

Residues 1 to 10 are compositionally biased toward gly residues; the sequence is MASSGLGNGV. Residues 1–60 form a disordered region; that stretch reads MASSGLGNGVGTSRSAKGLKSSSSSVDWLTRDLAETRIRDKVETDDERDSEPDIIDGAGA. A compositionally biased stretch (basic and acidic residues) spans 29–42; it reads LTRDLAETRIRDKV. Residues 43–54 show a composition bias toward acidic residues; it reads ETDDERDSEPDI. In terms of domain architecture, Protein kinase spans 83-367; the sequence is YISEHVVGTG…ALEACIHPLF (285 aa). Residues 89–97 and K112 each bind ATP; that span reads VGTGSFGMV. D208 functions as the Proton acceptor in the catalytic mechanism. Y243 is subject to Phosphotyrosine.

It belongs to the protein kinase superfamily. CMGC Ser/Thr protein kinase family. GSK-3 subfamily. Autophosphorylated mainly on threonine and serine residues. As to expression, expressed exclusively in inflorescences.

The catalysed reaction is L-seryl-[protein] + ATP = O-phospho-L-seryl-[protein] + ADP + H(+). It carries out the reaction L-threonyl-[protein] + ATP = O-phospho-L-threonyl-[protein] + ADP + H(+). In terms of biological role, may mediate extracellular signals to regulate transcription in differentiating cells. In Arabidopsis thaliana (Mouse-ear cress), this protein is Shaggy-related protein kinase kappa (ASK10).